We begin with the raw amino-acid sequence, 72 residues long: Translation initiation factor IF-1 (72 aa).

In terms of domain architecture, S1-like spans 1–72; the sequence is MAKEELLEFP…TKGRITYRFK (72 aa).

The protein belongs to the IF-1 family. In terms of assembly, component of the 30S ribosomal translation pre-initiation complex which assembles on the 30S ribosome in the order IF-2 and IF-3, IF-1 and N-formylmethionyl-tRNA(fMet); mRNA recruitment can occur at any time during PIC assembly.

Its subcellular location is the cytoplasm. Its function is as follows. One of the essential components for the initiation of protein synthesis. Stabilizes the binding of IF-2 and IF-3 on the 30S subunit to which N-formylmethionyl-tRNA(fMet) subsequently binds. Helps modulate mRNA selection, yielding the 30S pre-initiation complex (PIC). Upon addition of the 50S ribosomal subunit IF-1, IF-2 and IF-3 are released leaving the mature 70S translation initiation complex. The chain is Translation initiation factor IF-1 from Maricaulis maris (strain MCS10) (Caulobacter maris).